An 874-amino-acid chain; its full sequence is Alanine--tRNA ligase (874 aa).

Zn(2+)-binding residues include His563, His567, Cys665, and His669.

The protein belongs to the class-II aminoacyl-tRNA synthetase family. Zn(2+) is required as a cofactor.

The protein resides in the cytoplasm. The catalysed reaction is tRNA(Ala) + L-alanine + ATP = L-alanyl-tRNA(Ala) + AMP + diphosphate. In terms of biological role, catalyzes the attachment of alanine to tRNA(Ala) in a two-step reaction: alanine is first activated by ATP to form Ala-AMP and then transferred to the acceptor end of tRNA(Ala). Also edits incorrectly charged Ser-tRNA(Ala) and Gly-tRNA(Ala) via its editing domain. The chain is Alanine--tRNA ligase from Histophilus somni (strain 2336) (Haemophilus somnus).